A 110-amino-acid chain; its full sequence is Phosphoribosyl-ATP pyrophosphatase (110 aa).

Belongs to the PRA-PH family.

The protein resides in the cytoplasm. It catalyses the reaction 1-(5-phospho-beta-D-ribosyl)-ATP + H2O = 1-(5-phospho-beta-D-ribosyl)-5'-AMP + diphosphate + H(+). The protein operates within amino-acid biosynthesis; L-histidine biosynthesis; L-histidine from 5-phospho-alpha-D-ribose 1-diphosphate: step 2/9. In Clostridium botulinum (strain Kyoto / Type A2), this protein is Phosphoribosyl-ATP pyrophosphatase.